Here is a 550-residue protein sequence, read N- to C-terminus: Dr1-associated corepressor homolog (550 aa).

The 65-residue stretch at 7 to 71 folds into the Histone-fold domain; sequence TKFPMARIKK…ISVNHLKECI (65 aa). Basic and acidic residues predominate over residues 89 to 103; that stretch reads DDKNEKRGRPKKTEG. Disordered stretches follow at residues 89–355, 378–444, and 461–512; these read DDKN…GQQF, SLPV…SNIN, and FNSF…LPSF. The span at 104 to 140 shows a compositional bias: acidic residues; it reads EDGGEEEEEEEEEMDMGEEEEEEEDEDDDDSDEEEEE. Residues 148–164 show a composition bias toward gly residues; the sequence is GSRGGKGSRGGRGGARG. Residues 182–193 are compositionally biased toward low complexity; sequence TTITTTTATTTP. Polar residues predominate over residues 200–224; the sequence is NFANSPKDIQSTSLKKPSARKSNTT. Low complexity-rich tracts occupy residues 225-238, 245-350, and 382-422; these read SPKS…SAGS, NNNN…NNNN, and LNNS…NNSN.

Belongs to the NC2 alpha/DRAP1 family.

Its subcellular location is the nucleus. Involved in transcriptional regulation. Component of the NC2 complex which represses RNA polymerase II transcription through binding to tbp and thereby inhibiting the assembly of the preinitiation complex. This chain is Dr1-associated corepressor homolog (drap1), found in Dictyostelium discoideum (Social amoeba).